We begin with the raw amino-acid sequence, 1083 residues long: Solute carrier family 12 member 7 (1083 aa).

Residues 1–51 (MPTNFTVVPVEARADGAGDEAAERTEEPGSPESADPACPTPGDGNPRENSP) are disordered. The Cytoplasmic segment spans residues 1-119 (MPTNFTVVPV…RREIKAPRMG (119 aa)). Residues 12-27 (ARADGAGDEAAERTEE) show a composition bias toward basic and acidic residues. Phosphoserine is present on residues S30, S33, S50, and S62. The chain crosses the membrane as a discontinuously helical span at residues 120-142 (TFIGVYLPCLQNILGVILFLRLT). Positions 131 and 132 each coordinate K(+). V135 is a chloride binding site. Residues 143 to 149 (WIVGAAG) lie on the Extracellular side of the membrane. Residues 150 to 172 (VLESFLIVAMCCTCTMLTAISMS) traverse the membrane as a helical segment. Residues 173 to 196 (AIATNGVVPAGGSYYMISRSLGPE) are Cytoplasmic-facing. Residues 197–225 (FGGAVGLCFYLGTTFAGAMYILGTIEIFL) traverse the membrane as a helical segment. Residues 226–249 (TYISPSAAIFQAETADGEAAALLN) lie on the Extracellular side of the membrane. The next 2 helical transmembrane spans lie at 250–271 (NMRV…VGVK) and 272–300 (YVNK…KTAF). At 301-419 (APPDIPVCLL…PYVLTDIMTY (119 aa)) the chain is on the extracellular side. N-linked (GlcNAc...) asparagine glycans are attached at residues N312, N331, and N360. The helical transmembrane segment at 420–440 (FTMLVGIYFPSVTGIMAGSNR) threads the bilayer. 2 residues coordinate K(+): P429 and T432. P429 provides a ligand contact to chloride. The chloride site is built by G433 and I434. Over 441 to 450 (SGDLKDAQKS) the chain is Cytoplasmic. A helical transmembrane segment spans residues 451-473 (IPTGTILAIVTTSFIYLSCIVLF). Over 474–504 (GACIEGVVLRDKFGEALQGNLVIGMLAWPSP) the chain is Extracellular. The chain crosses the membrane as a helical span at residues 505 to 531 (WVIVIGSFFSTCGAGLQSLTGAPRLLQ). The Cytoplasmic segment spans residues 532–554 (AIARDGIIPFLQVFGHGKANGEP). 2 helical membrane-spanning segments follow: residues 555-573 (TWAL…LIAS) and 574-598 (LDSV…ACAV). Y589 provides a ligand contact to chloride. The Cytoplasmic portion of the chain corresponds to 599–612 (QTLLRTPNWRPRFK). The next 2 helical transmembrane spans lie at 613–635 (FYHW…ICSW) and 636–651 (YYAL…IYKY). Topologically, residues 652-1083 (IEYRGAEKEW…GGREVITIYS (432 aa)) are cytoplasmic. Residues 664-680 (GIRGLSLNAARYALLRV) are scissor helix. Phosphothreonine is present on residues T973 and T980.

It belongs to the SLC12A transporter family. K/Cl co-transporter subfamily. Homodimer; adopts a domain-swap conformation at the scissor helices connecting the transmembrane domain and C-terminal domain. Heterodimer with K-Cl cotransporter SLC12A5. Widely expressed with highest levels in kidney, liver and pancreas. Expressed in choroid plexus and suprachiasmatic nucleus.

It is found in the cell membrane. The enzyme catalyses K(+)(in) + chloride(in) = K(+)(out) + chloride(out). Its activity is regulated as follows. Activated by N-ethylmaleimide (NEM). Inhibited by furosemide, DIDS and bumetanide. The inhibition is much stronger in the presence of 50 mM K(+) in the uptake medium. Inhibited by DIOA. Inhibited by WNK3. In terms of biological role, mediates electroneutral potassium-chloride cotransport when activated by cell swelling. May mediate K(+) uptake into Deiters' cells in the cochlea and contribute to K(+) recycling in the inner ear. Important for the survival of cochlear outer and inner hair cells and the maintenance of the organ of Corti. May be required for basolateral Cl(-) extrusion in the kidney and contribute to renal acidification. The polypeptide is Solute carrier family 12 member 7 (Rattus norvegicus (Rat)).